Reading from the N-terminus, the 967-residue chain is Leucine--tRNA ligase (967 aa).

Positions 43-53 (PYLSGHLHVGH) match the 'HIGH' region motif. The 'KMSKS' region signature appears at 650 to 654 (KMSKS). K653 serves as a coordination point for ATP.

The protein belongs to the class-I aminoacyl-tRNA synthetase family.

It is found in the cytoplasm. It catalyses the reaction tRNA(Leu) + L-leucine + ATP = L-leucyl-tRNA(Leu) + AMP + diphosphate. The chain is Leucine--tRNA ligase from Pyrococcus abyssi (strain GE5 / Orsay).